The chain runs to 284 residues: ADP-polyphosphate phosphotransferase 3 (284 aa).

Composition is skewed to basic and acidic residues over residues 1–22 (MDKH…RKSA) and 260–277 (DLGK…DTRR). Disordered stretches follow at residues 1 to 32 (MDKH…TRSG) and 260 to 284 (DLGK…PNLF).

This sequence belongs to the polyphosphate kinase 2 (PPK2) family. Class I subfamily.

It carries out the reaction [phosphate](n) + ATP = [phosphate](n+1) + ADP. The enzyme catalyses [phosphate](n) + GTP = [phosphate](n+1) + GDP. In terms of biological role, uses inorganic polyphosphate (polyP) as a donor to convert ADP to ATP. Can also convert GDP to GTP, with lower efficiency. This Rhizobium meliloti (strain 1021) (Ensifer meliloti) protein is ADP-polyphosphate phosphotransferase 3.